A 523-amino-acid polypeptide reads, in one-letter code: 2-isopropylmalate synthase (523 aa).

A Pyruvate carboxyltransferase domain is found at 5 to 267; that stretch reads VIIFDTTLRD…HTNINHHEIW (263 aa). Mn(2+) is bound by residues aspartate 14, histidine 202, histidine 204, and asparagine 238. Residues 392 to 523 form a regulatory domain region; the sequence is RLDYFSVQSG…QNKENNKETV (132 aa).

The protein belongs to the alpha-IPM synthase/homocitrate synthase family. LeuA type 1 subfamily. As to quaternary structure, homodimer. The cofactor is Mn(2+).

It is found in the cytoplasm. The enzyme catalyses 3-methyl-2-oxobutanoate + acetyl-CoA + H2O = (2S)-2-isopropylmalate + CoA + H(+). It participates in amino-acid biosynthesis; L-leucine biosynthesis; L-leucine from 3-methyl-2-oxobutanoate: step 1/4. Catalyzes the condensation of the acetyl group of acetyl-CoA with 3-methyl-2-oxobutanoate (2-ketoisovalerate) to form 3-carboxy-3-hydroxy-4-methylpentanoate (2-isopropylmalate). In Salmonella paratyphi A (strain ATCC 9150 / SARB42), this protein is 2-isopropylmalate synthase.